Here is a 170-residue protein sequence, read N- to C-terminus: Adenine phosphoribosyltransferase (170 aa).

The protein belongs to the purine/pyrimidine phosphoribosyltransferase family. Homodimer.

It is found in the cytoplasm. The catalysed reaction is AMP + diphosphate = 5-phospho-alpha-D-ribose 1-diphosphate + adenine. Its pathway is purine metabolism; AMP biosynthesis via salvage pathway; AMP from adenine: step 1/1. Functionally, catalyzes a salvage reaction resulting in the formation of AMP, that is energically less costly than de novo synthesis. The polypeptide is Adenine phosphoribosyltransferase (Mycoplasma mycoides subsp. mycoides SC (strain CCUG 32753 / NCTC 10114 / PG1)).